Reading from the N-terminus, the 85-residue chain is Small ribosomal subunit protein uS17 (85 aa).

Belongs to the universal ribosomal protein uS17 family. Part of the 30S ribosomal subunit.

In terms of biological role, one of the primary rRNA binding proteins, it binds specifically to the 5'-end of 16S ribosomal RNA. The chain is Small ribosomal subunit protein uS17 from Rhodospirillum centenum (strain ATCC 51521 / SW).